We begin with the raw amino-acid sequence, 91 residues long: Putative transmembrane protein ORF91a (91 aa).

3 helical membrane-spanning segments follow: residues 17–37, 40–60, and 69–89; these read TGISFDSITGAIIAGVVVGLA, AFLGKFPDYVEVLIGVGLLFM, and GIGFVLTADGIYGLIKNYIST.

It localises to the host membrane. This is Putative transmembrane protein ORF91a from Acidianus convivator (ABV).